The sequence spans 443 residues: MNRSKTFGKIRKRLEEAKNKWARLCKVEYSYNESARLATDALLDGGVEDYEKVLNEEGEVDFLSGDEIQYIMKNIKEPMYSNDNQTEGECGSAANGNKSECFYPMNSDKSEPVSTLHNWSAEEKPYLKDKSSATVYFQTDKTNNVRETIRRCIHRTTQVLAILMDEFTDAEIFCDVLEAANKRNIFVYLLLDANKLHLFTQMCEKLQVRDLHMKNISVRSVTGDVYCAKSGKKFAGQIHEKFIISDWRCVLSGSYSFTWLSGQVHRNFLYKFSGVVVELFDEEFRHLYGSSKPVMGLKSPAPMAPVLRREDSGVSVMTDSTPESVNTTSEPFSSTSTASISNDSQRPKSPESTDPVLASPPRSPVRSPLQRMNSLHGYPSLISPPPQSNYQPNYYQRNYAPDSPSSFFNNNANIYRSFRMRQDDFSTPRFNQGWSLFSRSTMT.

The interval 311 to 403 is disordered; that stretch reads DSGVSVMTDS…YYQRNYAPDS (93 aa). The segment covering 315–326 has biased composition (polar residues); that stretch reads SVMTDSTPESVN. 2 stretches are compositionally biased toward low complexity: residues 327–344 and 388–399; these read TTSE…SNDS and SNYQPNYYQRNY.

The protein belongs to the FAM83 family.

The protein resides in the cytoplasm. Functionally, may function in the epidermal growth factor receptor/EGFR signaling pathway. This Xenopus laevis (African clawed frog) protein is Protein FAM83A.